Here is a 434-residue protein sequence, read N- to C-terminus: uncharacterized protein (434 aa).

A TRAM domain is found at 4–62 (LLTIHTQVEGEITALAFGGAGILRYHGFVIFVPFTAPGDQIICRIIEIKKSFAVAELVK). 4 residues coordinate [4Fe-4S] cluster: Cys-75, Cys-81, Cys-84, and Cys-161. 4 residues coordinate S-adenosyl-L-methionine: Gln-266, Tyr-295, Glu-316, and Asn-364. Cys-391 acts as the Nucleophile in catalysis.

It belongs to the class I-like SAM-binding methyltransferase superfamily. RNA M5U methyltransferase family.

This is an uncharacterized protein from Protochlamydia amoebophila (strain UWE25).